Here is an 87-residue protein sequence, read N- to C-terminus: Probable Vpr-like protein (87 aa).

The short motif at 40–47 (LQRWLAML) is the Nuclear export signal element. A Nuclear localization signal motif is present at residues 48 to 55 (RSGRNRNK).

It localises to the virion. Its subcellular location is the host nucleus. In terms of biological role, seems to function as a Vpr-like protein, since it mediates host cell cycle arrest in G2 phase. Cell cycle arrest creates a favorable environment for maximizing viral expression and production. This chain is Probable Vpr-like protein (tat), found in Caprine arthritis encephalitis virus (strain 63) (CAEV-63).